Here is a 625-residue protein sequence, read N- to C-terminus: Phosphomethylpyrimidine synthase (625 aa).

Residues asparagine 237, methionine 266, tyrosine 295, histidine 331, 351-353, 392-395, and glutamate 431 each bind substrate; these read SRG and DGLR. Residue histidine 435 participates in Zn(2+) binding. Residue tyrosine 458 participates in substrate binding. Histidine 499 lines the Zn(2+) pocket. [4Fe-4S] cluster-binding residues include cysteine 579, cysteine 582, and cysteine 587.

It belongs to the ThiC family. In terms of assembly, homodimer. The cofactor is [4Fe-4S] cluster.

It carries out the reaction 5-amino-1-(5-phospho-beta-D-ribosyl)imidazole + S-adenosyl-L-methionine = 4-amino-2-methyl-5-(phosphooxymethyl)pyrimidine + CO + 5'-deoxyadenosine + formate + L-methionine + 3 H(+). Its pathway is cofactor biosynthesis; thiamine diphosphate biosynthesis. Catalyzes the synthesis of the hydroxymethylpyrimidine phosphate (HMP-P) moiety of thiamine from aminoimidazole ribotide (AIR) in a radical S-adenosyl-L-methionine (SAM)-dependent reaction. This chain is Phosphomethylpyrimidine synthase, found in Cupriavidus metallidurans (strain ATCC 43123 / DSM 2839 / NBRC 102507 / CH34) (Ralstonia metallidurans).